The primary structure comprises 1131 residues: Protein DWARF 53 (1131 aa).

Residues 8-181 enclose the Clp R domain; the sequence is ARQCLSPAAV…KLAILRPAPP (174 aa). Repeat regions lie at residues 12–85 and 103–181; these read LSPA…LDRL and VSNS…PAPP. The interval 511 to 574 is disordered; sequence NRDPYKPFPR…ISSPSVTNKR (64 aa). Residues 558-569 are compositionally biased toward low complexity; the sequence is SSSTARPISSPS. The short motif at 578–582 is the EAR 1 element; that stretch reads LVLNL. The segment at 588–655 is disordered; that stretch reads KSDENLQERG…KRVEDSERSV (68 aa). Polar residues predominate over residues 597-609; it reads GMQSQHGTLSNVD. Residues 646-655 are compositionally biased toward basic and acidic residues; the sequence is KRVEDSERSV. Positions 799–803 match the EAR 2 motif; sequence LDLNL. 2 disordered regions span residues 951 to 970 and 976 to 1002; these read ISDD…RLHR and FDLN…NSYG. Residues 976–981 carry the EAR 3 motif; the sequence is FDLNLP. Residues 982–993 show a composition bias toward acidic residues; the sequence is VDEDEPLDADDD.

This sequence belongs to the ClpA/ClpB family. As to quaternary structure, interacts with D3. Interacts with D14. The interaction with D14 is enhanced in the presence of strigolactones. The interaction with D14 occurs in the presence of (2'R) stereoisomers of strigolactones, but not (2'S) stereoisomers. Interacts with the TOPLESS-related proteins TPR1, TPR2 and TPR3. Interacts with SPL14/IPA1. Polyubiquitinated. Strigolactone, but not karrikin, triggers rapid SCF(D3)-dependent degradation via the proteasome. As to expression, expressed in the shoot bases of seedlings, young leaves, axillary buds and young panicles. Expressed in young roots vasculature, culms, internodes and nodes, preferentially in the parenchyma cells surrounding the xylem.

It localises to the nucleus. Functionally, repressor of strigolactones (SL) signaling. Subjected to a negative feedback control of SL signaling. Suppresses the transcriptional activation activity of SPL14/IPA1 in SL signaling. Acts with SPL14/IPA1 to mediate the SL-regulated tiller development. Subject to a negative feedback regulation by SPL14/IPA1, which binds to D53 promoter to repress D53 gene expression. The chain is Protein DWARF 53 from Oryza sativa subsp. japonica (Rice).